We begin with the raw amino-acid sequence, 333 residues long: DNA-directed RNA polymerase subunit alpha (333 aa).

Positions 1–239 are alpha N-terminal domain (alpha-NTD); that stretch reads MSAVLDKGSL…TQARCFLNIA (239 aa). An alpha C-terminal domain (alpha-CTD) region spans residues 259 to 333; sequence DASDLLSARI…SLGMNLDSHG (75 aa).

The protein belongs to the RNA polymerase alpha chain family. Homodimer. The RNAP catalytic core consists of 2 alpha, 1 beta, 1 beta' and 1 omega subunit. When a sigma factor is associated with the core the holoenzyme is formed, which can initiate transcription.

It carries out the reaction RNA(n) + a ribonucleoside 5'-triphosphate = RNA(n+1) + diphosphate. DNA-dependent RNA polymerase catalyzes the transcription of DNA into RNA using the four ribonucleoside triphosphates as substrates. The sequence is that of DNA-directed RNA polymerase subunit alpha from Neorickettsia sennetsu (strain ATCC VR-367 / Miyayama) (Ehrlichia sennetsu).